The following is a 535-amino-acid chain: UDP-glucuronosyltransferase 1A1 (535 aa).

The N-terminal stretch at Met-1 to Ala-29 is a signal peptide. Asn-89, Asn-297, and Asn-435 each carry an N-linked (GlcNAc...) asparagine glycan. A helical membrane pass occupies residues Val-493–Tyr-509.

It belongs to the UDP-glycosyltransferase family. As to quaternary structure, homodimers. Homooligomer. Interacts with UGT1A3, UGT1A4, UGT1A6, UGT1A7, UGT1A8, UGT1A9 and UGT1A10 to form heterodimers.

The protein resides in the endoplasmic reticulum membrane. The enzyme catalyses glucuronate acceptor + UDP-alpha-D-glucuronate = acceptor beta-D-glucuronoside + UDP + H(+). It carries out the reaction 17beta-estradiol + UDP-alpha-D-glucuronate = 17beta-estradiol 3-O-(beta-D-glucuronate) + UDP + H(+). The catalysed reaction is 2-hydroxyestrone + UDP-alpha-D-glucuronate = 2-hydroxyestrone 3-O-(beta-D-glucuronate) + UDP + H(+). It catalyses the reaction 2-hydroxy-17beta-estradiol + UDP-alpha-D-glucuronate = 2-hydroxy-17beta-estradiol 3-O-(beta-D-glucuronate) + UDP + H(+). The enzyme catalyses 2-methoxy-17beta-estradiol + UDP-alpha-D-glucuronate = 2-methoxy-17beta-estradiol 3-O-(beta-D-glucuronate) + UDP + H(+). It carries out the reaction 17alpha-estradiol + UDP-alpha-D-glucuronate = 17alpha-estradiol 3-O-(beta-D-glucuronate) + UDP + H(+). The catalysed reaction is 16beta,17beta-estriol + UDP-alpha-D-glucuronate = 16beta,17beta-estriol 16-O-(beta-D-glucuronate) + UDP + H(+). It catalyses the reaction losartan + UDP-alpha-D-glucuronate = losartan-2-N-beta-D-glucuronide + UDP. The enzyme catalyses prunetin + UDP-alpha-D-glucuronate = prunetin-4'-O-beta-D-glucuronide + UDP. It carries out the reaction SN-38 + UDP-alpha-D-glucuronate = SN-38 O-beta-D-glucuronide + UDP + H(+). The catalysed reaction is (4Z,15Z)-bilirubin IXalpha + UDP-alpha-D-glucuronate = (4Z,15Z)-bilirubin IXalpha C12-beta-D-glucuronoside + UDP. It catalyses the reaction (4Z,15Z)-bilirubin IXalpha + UDP-alpha-D-glucuronate = (4Z,15Z)-bilirubin IXalpha C8-beta-D-glucuronoside + UDP. The enzyme catalyses (4Z,15Z)-bilirubin IXalpha C8-beta-D-glucuronoside + UDP-alpha-D-glucuronate = (4Z,15Z)-bilirubin IXalpha C8,C12-beta-D-bisglucuronoside + UDP. It carries out the reaction (4Z,15Z)-bilirubin IXalpha C12-beta-D-glucuronoside + UDP-alpha-D-glucuronate = (4Z,15Z)-bilirubin IXalpha C8,C12-beta-D-bisglucuronoside + UDP. The catalysed reaction is 8-iso-prostaglandin F2alpha + UDP-alpha-D-glucuronate = 8-iso-prostaglandin F2alpha-glucuronide + UDP + H(+). It catalyses the reaction (5Z,8Z,11Z,14Z)-eicosatetraenoate + UDP-alpha-D-glucuronate = O-[(5Z),(8Z),(11Z),(14Z)-eicosatetraenoyl]-beta-D-glucuronate + UDP. The enzyme catalyses 15-hydroxy-(5Z,8Z,11Z,13E)-eicosatetraenoate + UDP-alpha-D-glucuronate = 15-O-(beta-D-glucuronosyl)-(5Z,8Z,11Z,14Z)-eicosatetraenoate + UDP + H(+). It carries out the reaction 20-hydroxy-(5Z,8Z,11Z,14Z)-eicosatetraenoate + UDP-alpha-D-glucuronate = 20-O-(beta-D-glucuronosyl)-(5Z,8Z,11Z,14Z)-eicosatetraenoate + UDP + H(+). The catalysed reaction is prostaglandin B1 + UDP-alpha-D-glucuronate = 15-O-(beta-D-glucuronosyl)-prostaglandin B1 + UDP + H(+). It catalyses the reaction (E)-ferulate + UDP-alpha-D-glucuronate = (E)-4-O-(beta-D-glucuronosyl)-ferulate + UDP + H(+). The enzyme catalyses (E)-ferulate + UDP-alpha-D-glucuronate = (E)-ferulic acid beta-D-glucuronate ester + UDP. In terms of biological role, UDP-glucuronosyltransferase (UGT) that catalyzes phase II biotransformation reactions in which lipophilic substrates are conjugated with glucuronic acid to increase the metabolite's water solubility, thereby facilitating excretion into either the urine or bile. Essential for the elimination and detoxification of drugs, xenobiotics and endogenous compounds. Catalyzes the glucuronidation of endogenous estrogen hormones such as estradiol, estrone and estriol. Involved in the glucuronidation of bilirubin, a degradation product occurring in the normal catabolic pathway that breaks down heme in vertebrates. Involved in the glucuronidation of arachidonic acid (AA) and AA-derived eicosanoids including 15-HETE, 20-HETE, PGB1 and F2-isoprostane (8-iso-PGF2alpha). Involved in the glucuronidation of the phytochemical ferulic acid at the phenolic or the carboxylic acid group. Also catalyzes the glucuronidation the isoflavones genistein, daidzein, glycitein, formononetin, biochanin A and prunetin, which are phytoestrogens with anticancer and cardiovascular properties. Involved in the glucuronidation of the AGTR1 angiotensin receptor antagonist losartan, a drug which can inhibit the effect of angiotensin II. Involved in the biotransformation of 7-ethyl-10-hydroxycamptothecin (SN-38), the pharmacologically active metabolite of the anticancer drug irinotecan. This Rattus norvegicus (Rat) protein is UDP-glucuronosyltransferase 1A1.